Here is a 131-residue protein sequence, read N- to C-terminus: Protein yippee-like PJ691.02 (131 aa).

A Yippee domain is found at 12–109 (RCYVCAKCKT…LEMQDAVLQR (98 aa)). 4 residues coordinate Zn(2+): cysteine 16, cysteine 19, cysteine 72, and cysteine 75.

This sequence belongs to the yippee family.

The polypeptide is Protein yippee-like PJ691.02 (Schizosaccharomyces pombe (strain 972 / ATCC 24843) (Fission yeast)).